A 350-amino-acid chain; its full sequence is Geranylgeranyl pyrophosphate synthase (350 aa).

Isopentenyl diphosphate-binding residues include lysine 66, arginine 69, and histidine 98. Mg(2+) contacts are provided by aspartate 105 and aspartate 109. Residue arginine 114 participates in dimethylallyl diphosphate binding. Arginine 115 lines the isopentenyl diphosphate pocket. 5 residues coordinate dimethylallyl diphosphate: lysine 200, threonine 201, glutamine 236, asparagine 243, and lysine 263.

The protein belongs to the FPP/GGPP synthase family. It depends on Mg(2+) as a cofactor.

It catalyses the reaction isopentenyl diphosphate + dimethylallyl diphosphate = (2E)-geranyl diphosphate + diphosphate. It carries out the reaction isopentenyl diphosphate + (2E)-geranyl diphosphate = (2E,6E)-farnesyl diphosphate + diphosphate. The enzyme catalyses isopentenyl diphosphate + (2E,6E)-farnesyl diphosphate = (2E,6E,10E)-geranylgeranyl diphosphate + diphosphate. It functions in the pathway secondary metabolite biosynthesis; terpenoid biosynthesis. In terms of biological role, geranylgeranyl pyrophosphate synthase; part of the gene cluster that mediates the biosynthesis of pleuromutilin, a tricyclic diterpene showing antibacterial properties. The geranylgeranyl diphosphate (GGPP) synthase catalyzes the first step in pleuromutilin biosynthesis. GGPP is then substrate of the premutilin synthase (PS) to yield premutilin. Premutilin synthase is a bifunctional enzyme composed of the fusion of a class II diterpene cyclase (DTC) and a class I diterpene synthase (DTS), with the corresponding domains and active sites containing characteristic aspartate-rich motifs. GGPP is first converted to mutildienyl-diphosphate (MPP) at the class II DTC site. MPP is subsequently further cyclized at the class I DTS site, followed by a 1,5-hydride shift and addition of water prior to terminating deprotonation, to yield premutilin. In addition to the aforementioned GGPP synthase and bifunctional diterpene synthase, the cluster also contains three cytochrome P450 monooxygenases, a short-chain alcohol dehydrogenase, and an acyltransferase, involved in the conversion of premutilin to pleuromutilin. The cytochrome P450 monooxygenases P450-1 and P450-2 hydroxylate premutilin at C-11 and C-3, respectively, producing 11-hydroxypremutilin and 3-hydroxypremutilin. The combination of the actions of both ple5 and ple6 leads to the production of 3,11-dihydroxypremutilin. The short chain dehydrogenase SDR further converts 3,11-dihydroxypremutilin into mutilin. The acetyltransferase ATF then acetylates mutilin to produce 14-O-acetylmutilin. Finally, the cytochrome P450 monooxygenase P450-3 catalyzes hydroxylation on the alpha position of the acetyl side chain of 14-O-acetylmutilin to yield pleuromutilin. The sequence is that of Geranylgeranyl pyrophosphate synthase from Clitopilus passeckerianus (Pleurotus passeckerianus).